Reading from the N-terminus, the 238-residue chain is Neuromodulin (238 aa).

The interval 1–238 (MLCCMRRTKQ…EEPEADQEHA (238 aa)) is disordered. S-palmitoyl cysteine attachment occurs at residues Cys3 and Cys4. Positions 9-32 (KQVEKNDDDQKIEQDGIKPEDKAH) are enriched in basic and acidic residues. Residues 31 to 60 (AHKAATKIQASFRGHITRKKLKGEKKDDVQ) enclose the IQ domain. Ser41 is modified (phosphoserine; by PHK and PKC). A compositionally biased stretch (basic and acidic residues) spans 54 to 83 (EKKDDVQAAEAEANKKDEAPVADGVEKKGE). Residues 84-95 (GTTTAEAAPATG) show a composition bias toward low complexity. The segment covering 97–116 (KPDEPGKAGETPSEEKKGEG) has biased composition (basic and acidic residues). Positions 119-130 (ATEQAAPQAPAS) are enriched in low complexity. The span at 139 to 154 (ETESATKASTDNSPSS) shows a compositional bias: polar residues. 3 positions are modified to phosphoserine: Ser151, Ser153, and Ser154. The segment covering 155-167 (KAEDAPAKEEPKQ) has biased composition (basic and acidic residues). Over residues 168–199 (ADVPAAVTAAAATTPAAEDAAAKATAQPPTET) the composition is skewed to low complexity. Thr181 bears the Phosphothreonine mark. A phosphoserine; by CK2 mark is found at Ser202 and Ser203. A compositionally biased stretch (basic and acidic residues) spans 213 to 225 (DETKPKESARQDE). Acidic residues predominate over residues 226–238 (GKEEEPEADQEHA).

Belongs to the neuromodulin family. In terms of assembly, identified in a complex containing FGFR4, NCAM1, CDH2, PLCG1, FRS2, SRC, SHC1, GAP43 and CTTN. Interacts (via IQ domain) with calmodulin. Binds calmodulin with a greater affinity in the absence of Ca(2+) than in its presence. Phosphorylated. Phosphorylation of this protein by a protein kinase C is specifically correlated with certain forms of synaptic plasticity. Post-translationally, palmitoylated by ZDHHC3. Palmitoylation is regulated by ARF6 and is essential for plasma membrane association and axonal and dendritic filopodia induction. Deacylated by LYPLA2.

The protein resides in the cell membrane. It is found in the cell projection. Its subcellular location is the growth cone membrane. The protein localises to the synapse. It localises to the filopodium membrane. The protein resides in the perikaryon. It is found in the dendrite. Its subcellular location is the axon. The protein localises to the cytoplasm. Functionally, this protein is associated with nerve growth. It is a major component of the motile 'growth cones' that form the tips of elongating axons. Plays a role in axonal and dendritic filopodia induction. The chain is Neuromodulin (GAP43) from Homo sapiens (Human).